The sequence spans 232 residues: Flagellar L-ring protein (232 aa).

The signal sequence occupies residues 1 to 21 (MQKNAAHTYAISSLLVLSLTG). The N-palmitoyl cysteine moiety is linked to residue Cys22. Cys22 is lipidated: S-diacylglycerol cysteine.

Belongs to the FlgH family. As to quaternary structure, the basal body constitutes a major portion of the flagellar organelle and consists of four rings (L,P,S, and M) mounted on a central rod.

It is found in the cell outer membrane. The protein resides in the bacterial flagellum basal body. Its function is as follows. Assembles around the rod to form the L-ring and probably protects the motor/basal body from shearing forces during rotation. The sequence is that of Flagellar L-ring protein from Escherichia coli O6:H1 (strain CFT073 / ATCC 700928 / UPEC).